The following is a 158-amino-acid chain: MKLNEIKDNEGSTHSRKRLGRGIGSGSGKTGGRGVKGQKSRSGVAINGFEGGQMPIYRRLPKRGFNNIFASDFVVVSLARIQAAIDAGKLDAKATVDAAALKAAGVIRRTKDGVRVLADGELKAKITIVVAGASKPAVEKIEKAGGTVTLLSAPAAAE.

Residues 1–13 (MKLNEIKDNEGST) show a composition bias toward basic and acidic residues. The tract at residues 1-45 (MKLNEIKDNEGSTHSRKRLGRGIGSGSGKTGGRGVKGQKSRSGVA) is disordered. Positions 21–35 (RGIGSGSGKTGGRGV) are enriched in gly residues.

This sequence belongs to the universal ribosomal protein uL15 family. In terms of assembly, part of the 50S ribosomal subunit.

Functionally, binds to the 23S rRNA. In Rhizobium leguminosarum bv. trifolii (strain WSM2304), this protein is Large ribosomal subunit protein uL15.